The primary structure comprises 67 residues: Large ribosomal subunit protein bL32 (67 aa).

A compositionally biased stretch (basic residues) spans 1-19 (MAVPKRKMSRANTRARRSQ). Residues 1 to 21 (MAVPKRKMSRANTRARRSQWK) form a disordered region.

Belongs to the bacterial ribosomal protein bL32 family.

This chain is Large ribosomal subunit protein bL32, found in Micrococcus luteus (strain ATCC 4698 / DSM 20030 / JCM 1464 / CCM 169 / CCUG 5858 / IAM 1056 / NBRC 3333 / NCIMB 9278 / NCTC 2665 / VKM Ac-2230) (Micrococcus lysodeikticus).